Consider the following 389-residue polypeptide: Formate-dependent phosphoribosylglycinamide formyltransferase (389 aa).

N(1)-(5-phospho-beta-D-ribosyl)glycinamide-binding positions include 15–16 (EL) and Glu-75. Residues Arg-107, Lys-148, 153–158 (SSGKGQ), 188–191 (EEFL), and Glu-196 contribute to the ATP site. In terms of domain architecture, ATP-grasp spans 112–302 (DLAAGELALR…EFELHLRAVL (191 aa)). 2 residues coordinate Mg(2+): Glu-261 and Glu-273. N(1)-(5-phospho-beta-D-ribosyl)glycinamide-binding positions include Asp-280, Lys-350, and 357 to 358 (RR).

Belongs to the PurK/PurT family. In terms of assembly, homodimer.

It carries out the reaction N(1)-(5-phospho-beta-D-ribosyl)glycinamide + formate + ATP = N(2)-formyl-N(1)-(5-phospho-beta-D-ribosyl)glycinamide + ADP + phosphate + H(+). The protein operates within purine metabolism; IMP biosynthesis via de novo pathway; N(2)-formyl-N(1)-(5-phospho-D-ribosyl)glycinamide from N(1)-(5-phospho-D-ribosyl)glycinamide (formate route): step 1/1. In terms of biological role, involved in the de novo purine biosynthesis. Catalyzes the transfer of formate to 5-phospho-ribosyl-glycinamide (GAR), producing 5-phospho-ribosyl-N-formylglycinamide (FGAR). Formate is provided by PurU via hydrolysis of 10-formyl-tetrahydrofolate. In Synechococcus sp. (strain WH7803), this protein is Formate-dependent phosphoribosylglycinamide formyltransferase.